The primary structure comprises 1807 residues: Phospholipase D (1807 aa).

Residues 1-28 (MPGPDDDVREPTAAARTNNSGYGLRAAP) form a disordered region. 3 helical membrane passes run 257-277 (IAFV…IVTS), 305-325 (AGVF…VFVY), and 587-607 (VYYI…GFLA). The tract at residues 697-734 (TASRMGTGNLAPASSRVDSSTQSEDSFEAPKPPPSSVS) is disordered. PLD phosphodiesterase domains lie at 853–880 (GFWS…CFGR) and 1249–1276 (EQIY…NDRS). Active-site residues include H858, K860, D865, H1254, K1256, and D1261. Polar residues-rich tracts occupy residues 1531 to 1547 (FSRS…SQLD), 1568 to 1578 (YNSNSMPSNAS), and 1597 to 1614 (YPNS…QSPA). The disordered stretch occupies residues 1531–1621 (FSRSNSVSTP…SPAIATGARS (91 aa)).

It belongs to the phospholipase D family. TM-PLD subfamily.

Its subcellular location is the membrane. The enzyme catalyses a 1,2-diacyl-sn-glycero-3-phosphocholine + H2O = a 1,2-diacyl-sn-glycero-3-phosphate + choline + H(+). Its function is as follows. Hydrolyzes glycerol-phospholipids at the terminal phosphodiesteric bond. The polypeptide is Phospholipase D (Phytophthora infestans (Potato late blight agent)).